The chain runs to 216 residues: ATP-dependent dethiobiotin synthetase BioD (216 aa).

12–17 is an ATP binding site; the sequence is GVGKSY. Position 16 (S16) interacts with Mg(2+). K37 is an active-site residue. T41 contributes to the substrate binding site. The Mg(2+) site is built by H53 and E115. Residue 115–118 participates in ATP binding; that stretch reads EGAG.

This sequence belongs to the dethiobiotin synthetase family. In terms of assembly, homodimer. Requires Mg(2+) as cofactor.

It is found in the cytoplasm. It carries out the reaction (7R,8S)-7,8-diammoniononanoate + CO2 + ATP = (4R,5S)-dethiobiotin + ADP + phosphate + 3 H(+). The protein operates within cofactor biosynthesis; biotin biosynthesis; biotin from 7,8-diaminononanoate: step 1/2. In terms of biological role, catalyzes a mechanistically unusual reaction, the ATP-dependent insertion of CO2 between the N7 and N8 nitrogen atoms of 7,8-diaminopelargonic acid (DAPA, also called 7,8-diammoniononanoate) to form a ureido ring. The polypeptide is ATP-dependent dethiobiotin synthetase BioD (Wolinella succinogenes (strain ATCC 29543 / DSM 1740 / CCUG 13145 / JCM 31913 / LMG 7466 / NCTC 11488 / FDC 602W) (Vibrio succinogenes)).